Reading from the N-terminus, the 253-residue chain is Phosphate import ATP-binding protein PstB 3 (253 aa).

The region spanning leucine 8–isoleucine 248 is the ABC transporter domain. Glycine 40–serine 47 lines the ATP pocket.

Belongs to the ABC transporter superfamily. Phosphate importer (TC 3.A.1.7) family. As to quaternary structure, the complex is composed of two ATP-binding proteins (PstB), two transmembrane proteins (PstC and PstA) and a solute-binding protein (PstS).

The protein localises to the cell membrane. The catalysed reaction is phosphate(out) + ATP + H2O = ADP + 2 phosphate(in) + H(+). Its function is as follows. Part of the ABC transporter complex PstSACB involved in phosphate import. Responsible for energy coupling to the transport system. The chain is Phosphate import ATP-binding protein PstB 3 from Streptococcus agalactiae serotype III (strain NEM316).